A 420-amino-acid chain; its full sequence is Polymerase delta-interacting protein 3 (420 aa).

Position 2 is an N-acetylalanine (Ala2). The residue at position 5 (Ser5) is a Phosphoserine. Arg33 is subject to Omega-N-methylarginine. At Ser127 the chain carries Phosphoserine. At Thr140 the chain carries Phosphothreonine. Lys200 participates in a covalent cross-link: Glycyl lysine isopeptide (Lys-Gly) (interchain with G-Cter in SUMO2). Phosphoserine occurs at positions 215 and 217. Lys223 is covalently cross-linked (Glycyl lysine isopeptide (Lys-Gly) (interchain with G-Cter in SUMO2)). Ser244 carries the phosphoserine modification. Lys248 participates in a covalent cross-link: Glycyl lysine isopeptide (Lys-Gly) (interchain with G-Cter in SUMO2). The interval 256 to 277 (TLVNKEEPPKELPPAEPVLSPL) is disordered. A Phosphoserine modification is found at Ser275. The RRM domain occupies 280–351 (TKMTVNNLHP…QPMKCNLHMN (72 aa)). The interval 369 to 394 (PSVKKESELPRRGNPASSNPPAEVDP) is disordered. Basic and acidic residues predominate over residues 370–379 (SVKKESELPR). A Glycyl lysine isopeptide (Lys-Gly) (interchain with G-Cter in SUMO2) cross-link involves residue Lys372. At Ser385 the chain carries Phosphoserine. A Glycyl lysine isopeptide (Lys-Gly) (interchain with G-Cter in SUMO2) cross-link involves residue Lys417.

Interacts with POLD2. Interacts with NCBP1 and EIF4A3. Associates with the multiprotein exon junction complex (EJC). Interacts with RPS6KB1 (activated). Interacts with ERH. Interacts with THOC2, DDX39B and ZC3H11A; the interactions are ATP-dependent and indicative for an association with the TREX complex.

It localises to the nucleus. The protein resides in the nucleus speckle. It is found in the cytoplasm. In terms of biological role, is involved in regulation of translation. Is preferentially associated with CBC-bound spliced mRNA-protein complexes during the pioneer round of mRNA translation. Contributes to enhanced translational efficiency of spliced over nonspliced mRNAs. Recruits activated ribosomal protein S6 kinase beta-1 I/RPS6KB1 to newly synthesized mRNA. Involved in nuclear mRNA export; probably mediated by association with the TREX complex. The chain is Polymerase delta-interacting protein 3 (Poldip3) from Mus musculus (Mouse).